A 38-amino-acid polypeptide reads, in one-letter code: Large ribosomal subunit protein bL12 (38 aa).

The protein belongs to the bacterial ribosomal protein bL12 family. In terms of assembly, homodimer. Part of the ribosomal stalk of the 50S ribosomal subunit. Forms a multimeric L10(L12)X complex, where L10 forms an elongated spine to which 2 to 4 L12 dimers bind in a sequential fashion. Binds GTP-bound translation factors.

In terms of biological role, forms part of the ribosomal stalk which helps the ribosome interact with GTP-bound translation factors. Is thus essential for accurate translation. In Salinivibrio costicola (Vibrio costicola), this protein is Large ribosomal subunit protein bL12 (rplL).